A 327-amino-acid chain; its full sequence is Biotin synthase (327 aa).

One can recognise a Radical SAM core domain in the interval 52–279 (TKVQLSTLVS…ASYVRLSAGR (228 aa)). [4Fe-4S] cluster-binding residues include cysteine 67, cysteine 71, and cysteine 74. [2Fe-2S] cluster-binding residues include cysteine 111, cysteine 142, cysteine 202, and arginine 274.

It belongs to the radical SAM superfamily. Biotin synthase family. In terms of assembly, homodimer. It depends on [4Fe-4S] cluster as a cofactor. Requires [2Fe-2S] cluster as cofactor.

The catalysed reaction is (4R,5S)-dethiobiotin + (sulfur carrier)-SH + 2 reduced [2Fe-2S]-[ferredoxin] + 2 S-adenosyl-L-methionine = (sulfur carrier)-H + biotin + 2 5'-deoxyadenosine + 2 L-methionine + 2 oxidized [2Fe-2S]-[ferredoxin]. The protein operates within cofactor biosynthesis; biotin biosynthesis; biotin from 7,8-diaminononanoate: step 2/2. Catalyzes the conversion of dethiobiotin (DTB) to biotin by the insertion of a sulfur atom into dethiobiotin via a radical-based mechanism. This is Biotin synthase from Chromobacterium violaceum (strain ATCC 12472 / DSM 30191 / JCM 1249 / CCUG 213 / NBRC 12614 / NCIMB 9131 / NCTC 9757 / MK).